A 367-amino-acid chain; its full sequence is UDP-N-acetylglucosamine--N-acetylmuramyl-(pentapeptide) pyrophosphoryl-undecaprenol N-acetylglucosamine transferase (367 aa).

UDP-N-acetyl-alpha-D-glucosamine is bound by residues 15–17, Asn-126, Arg-169, Ser-197, and Gln-298; that span reads TGG.

The protein belongs to the glycosyltransferase 28 family. MurG subfamily.

Its subcellular location is the cell inner membrane. It catalyses the reaction di-trans,octa-cis-undecaprenyl diphospho-N-acetyl-alpha-D-muramoyl-L-alanyl-D-glutamyl-meso-2,6-diaminopimeloyl-D-alanyl-D-alanine + UDP-N-acetyl-alpha-D-glucosamine = di-trans,octa-cis-undecaprenyl diphospho-[N-acetyl-alpha-D-glucosaminyl-(1-&gt;4)]-N-acetyl-alpha-D-muramoyl-L-alanyl-D-glutamyl-meso-2,6-diaminopimeloyl-D-alanyl-D-alanine + UDP + H(+). The protein operates within cell wall biogenesis; peptidoglycan biosynthesis. Functionally, cell wall formation. Catalyzes the transfer of a GlcNAc subunit on undecaprenyl-pyrophosphoryl-MurNAc-pentapeptide (lipid intermediate I) to form undecaprenyl-pyrophosphoryl-MurNAc-(pentapeptide)GlcNAc (lipid intermediate II). In Bradyrhizobium sp. (strain BTAi1 / ATCC BAA-1182), this protein is UDP-N-acetylglucosamine--N-acetylmuramyl-(pentapeptide) pyrophosphoryl-undecaprenol N-acetylglucosamine transferase.